Here is a 416-residue protein sequence, read N- to C-terminus: Trifolitoxin-processing protein TfxD (416 aa).

Transmembrane regions (helical) follow at residues 24–44 (MIPN…ALQV), 48–68 (VLIT…LICM), 79–99 (VFAA…ALIA), 114–134 (IAFI…AYCA), 153–173 (SSLI…FAGT), 176–196 (SIIS…LAYA), 230–250 (ASFI…VVAA), 255–275 (IAVF…LAIG), 295–315 (VLIA…VGLI), 322–342 (IFAL…CDGL), and 372–392 (VILA…ALVL).

The protein localises to the cell membrane. Functionally, the actions of the proteins TfxB, TfxD and TfxF are implicated in the processing of the inactive trifolitoxin (TfxA) precursor into the active peptide. In Rhizobium leguminosarum bv. trifolii, this protein is Trifolitoxin-processing protein TfxD (tfxD).